Reading from the N-terminus, the 471-residue chain is Tryptophanase (471 aa).

K5, K115, and K156 each carry N6-acetyllysine. Residue K270 is modified to N6-(pyridoxal phosphate)lysine. K450 carries the post-translational modification N6-acetyllysine.

Belongs to the beta-eliminating lyase family. Homotetramer. The cofactor is pyridoxal 5'-phosphate.

It catalyses the reaction L-tryptophan + H2O = indole + pyruvate + NH4(+). The protein operates within amino-acid degradation; L-tryptophan degradation via pyruvate pathway; indole and pyruvate from L-tryptophan: step 1/1. This chain is Tryptophanase, found in Shigella boydii serotype 18 (strain CDC 3083-94 / BS512).